The chain runs to 689 residues: tRNA wybutosine-synthesizing protein 4 (689 aa).

The interval 1–33 (MTSTSKLDANQLARQRKKLEKDRRKKVYDDQQV) is disordered. The segment covering 14 to 26 (RQRKKLEKDRRKK) has biased composition (basic residues). S-adenosyl-L-methionine contacts are provided by residues Arg-84, Gly-111, Asp-137, 183-184 (DL), and Glu-215.

This sequence belongs to the methyltransferase superfamily. LCMT family.

It catalyses the reaction 7-[(3S)-3-amino-3-carboxypropyl]wyosine(37) in tRNA(Phe) + S-adenosyl-L-methionine = 7-[(3S)-(3-amino-3-methoxycarbonyl)propyl]wyosine(37) in tRNA(Phe) + S-adenosyl-L-homocysteine. The catalysed reaction is 7-[(3S)-(3-amino-3-methoxycarbonyl)propyl]wyosine(37) in tRNA(Phe) + S-adenosyl-L-methionine + CO2 = wybutosine(37) in tRNA(Phe) + S-adenosyl-L-homocysteine + 2 H(+). Its pathway is tRNA modification; wybutosine-tRNA(Phe) biosynthesis. Its function is as follows. Probable S-adenosyl-L-methionine-dependent methyltransferase that acts as a component of the wybutosine biosynthesis pathway. Wybutosine is a hyper modified guanosine with a tricyclic base found at the 3'-position adjacent to the anticodon of eukaryotic phenylalanine tRNA. May methylate the carboxyl group of leucine residues to form alpha-leucine ester residues. This is tRNA wybutosine-synthesizing protein 4 (PPM2) from Candida albicans (strain SC5314 / ATCC MYA-2876) (Yeast).